A 537-amino-acid polypeptide reads, in one-letter code: [Pyruvate dehydrogenase [acetyl-transferring]]-phosphatase 1, mitochondrial (537 aa).

The N-terminal 71 residues, 1-71 (MPAPTQLFFP…WWQYTQGRRY (71 aa)), are a transit peptide targeting the mitochondrion. Residues 109–525 (ILGFDSNQLP…DDITIIVVQF (417 aa)) enclose the PPM-type phosphatase domain. Residues Asp-144 and Gly-145 each contribute to the Mn(2+) site. The residue at position 202 (Lys-202) is an N6-acetyllysine. Mn(2+) is bound by residues Asp-418 and Asp-516.

It belongs to the PP2C family. As to quaternary structure, heterodimer of a catalytic (PDP1) and a regulatory (PDPR) subunit. Mn(2+) serves as cofactor. The cofactor is Mg(2+).

It is found in the mitochondrion. The catalysed reaction is O-phospho-L-seryl-[pyruvate dehydrogenase E1 alpha subunit] + H2O = L-seryl-[pyruvate dehydrogenase E1 alpha subunit] + phosphate. With respect to regulation, magnesium-dependent and calcium-stimulated. PDP1 activity strongly depends on its Ca(2+)-dependent binding to the lipoyl domain of E2 subunit of component of the pyruvate dehydrogenase complex. Functionally, mitochondrial enzyme that catalyzes the dephosphorylation and concomitant reactivation of the alpha subunit of the E1 component of the pyruvate dehydrogenase complex (PDC), thereby stimulating the conversion of pyruvate into acetyl-CoA. The sequence is that of [Pyruvate dehydrogenase [acetyl-transferring]]-phosphatase 1, mitochondrial from Homo sapiens (Human).